The primary structure comprises 373 residues: Protein U3 (373 aa).

It belongs to the herpesviridae US22 family.

The protein is Protein U3 (U3) of Human herpesvirus 6A (strain Uganda-1102) (HHV-6 variant A).